A 79-amino-acid polypeptide reads, in one-letter code: MKLTCVLIITVLFLTASQLITADYSRDQRQYRAVRLGDEMRTFKGARDCGEQGQGCYTRPCCPGLHCAAGATGGGSCQP.

Positions 1–22 (MKLTCVLIITVLFLTASQLITA) are cleaved as a signal peptide. Positions 23–46 (DYSRDQRQYRAVRLGDEMRTFKGA) are excised as a propeptide. Cystine bridges form between Cys-49/Cys-62, Cys-56/Cys-67, and Cys-61/Cys-77.

It belongs to the conotoxin O1 superfamily. In terms of tissue distribution, expressed by the venom duct.

It is found in the secreted. This chain is Conotoxin 1, found in Conus vexillum (Flag cone).